Consider the following 166-residue polypeptide: Large ribosomal subunit protein mL49 (166 aa).

Positions 56–78 (RIPDPPKHEHYPTPSGWQPPRDP) are disordered.

The protein belongs to the mitochondrion-specific ribosomal protein mL49 family. In terms of assembly, component of the mitochondrial large ribosomal subunit (mt-LSU). Mature mammalian 55S mitochondrial ribosomes consist of a small (28S) and a large (39S) subunit. The 28S small subunit contains a 12S ribosomal RNA (12S mt-rRNA) and 30 different proteins. The 39S large subunit contains a 16S rRNA (16S mt-rRNA), a copy of mitochondrial valine transfer RNA (mt-tRNA(Val)), which plays an integral structural role, and 52 different proteins. Interacts with OXA1L. Ubiquitous.

The protein resides in the mitochondrion. The chain is Large ribosomal subunit protein mL49 (MRPL49) from Homo sapiens (Human).